A 418-amino-acid polypeptide reads, in one-letter code: Serine hydroxymethyltransferase (418 aa).

(6S)-5,6,7,8-tetrahydrofolate-binding positions include Leu-120 and 124 to 126; that span reads GHL. Lys-229 carries the N6-(pyridoxal phosphate)lysine modification. 353-355 provides a ligand contact to (6S)-5,6,7,8-tetrahydrofolate; it reads SPF.

It belongs to the SHMT family. As to quaternary structure, homodimer. It depends on pyridoxal 5'-phosphate as a cofactor.

It is found in the cytoplasm. The enzyme catalyses (6R)-5,10-methylene-5,6,7,8-tetrahydrofolate + glycine + H2O = (6S)-5,6,7,8-tetrahydrofolate + L-serine. It functions in the pathway one-carbon metabolism; tetrahydrofolate interconversion. The protein operates within amino-acid biosynthesis; glycine biosynthesis; glycine from L-serine: step 1/1. Its function is as follows. Catalyzes the reversible interconversion of serine and glycine with tetrahydrofolate (THF) serving as the one-carbon carrier. This reaction serves as the major source of one-carbon groups required for the biosynthesis of purines, thymidylate, methionine, and other important biomolecules. Also exhibits THF-independent aldolase activity toward beta-hydroxyamino acids, producing glycine and aldehydes, via a retro-aldol mechanism. The polypeptide is Serine hydroxymethyltransferase (Psychrobacter cryohalolentis (strain ATCC BAA-1226 / DSM 17306 / VKM B-2378 / K5)).